Here is a 385-residue protein sequence, read N- to C-terminus: Transmembrane protein 271 (385 aa).

2 helical membrane-spanning segments follow: residues Cys-9–Leu-29 and Gly-50–Leu-70. The tract at residues Glu-83–Ala-111 is disordered. Residues Leu-121–Ile-141 form a helical membrane-spanning segment. Residues Pro-160–Ala-203 form a disordered region. Low complexity predominate over residues Pro-163–Arg-197. Residues Val-219–Val-239 traverse the membrane as a helical segment. Residues Ser-245–Glu-305 form a disordered region. The span at Gln-246–Gly-258 shows a compositional bias: basic residues. Residues Arg-259–Ser-277 show a composition bias toward low complexity. The segment covering Arg-278–Gln-292 has biased composition (basic residues).

The protein resides in the membrane. The sequence is that of Transmembrane protein 271 from Homo sapiens (Human).